The following is a 428-amino-acid chain: Elongation factor 1-alpha (428 aa).

A tr-type G domain is found at Lys5 to Thr225. The G1 stretch occupies residues Gly14–Ser21. Residue Gly14 to Ser21 coordinates GTP. Ser21 is a Mg(2+) binding site. The segment at Gly70 to Asp74 is G2. Positions Asp91–Gly94 are G3. GTP is bound by residues Asp91–His95 and Asn149–Asp152. The interval Asn149–Asp152 is G4. Residues Ala189–Leu191 are G5.

Belongs to the TRAFAC class translation factor GTPase superfamily. Classic translation factor GTPase family. EF-Tu/EF-1A subfamily.

The protein localises to the cytoplasm. The enzyme catalyses GTP + H2O = GDP + phosphate + H(+). In terms of biological role, GTP hydrolase that promotes the GTP-dependent binding of aminoacyl-tRNA to the A-site of ribosomes during protein biosynthesis. In Methanococcus maripaludis (strain C6 / ATCC BAA-1332), this protein is Elongation factor 1-alpha.